The primary structure comprises 340 residues: Sodium/bile acid cotransporter 7 (340 aa).

Topologically, residues 1–10 (MRLLERARKE) are cytoplasmic. The helical transmembrane segment at 11–31 (WFMVGIVVAIGAAKLEPSVGV) threads the bilayer. Residues 32–37 (NGGPLK) are Extracellular-facing. Residues 38 to 58 (PEITVSYIAVATIFFNSGLSL) form a helical membrane-spanning segment. Over 59–71 (KTEELTSALVHLR) the chain is Cytoplasmic. A helical transmembrane segment spans residues 72 to 92 (LHLFIQIFTLAFFPAAIWLFL). At 93-116 (QLLSVTSINEWLLKGLQTVGCMPP) the chain is on the extracellular side. The chain crosses the membrane as a helical span at residues 117 to 137 (PVSSAVILTKAVGGNEAAAIF). Position 138 (Asn-138) is a topological domain, cytoplasmic. A helical membrane pass occupies residues 139-159 (SAFGSFLGIVVTPVLLLLFLG). The Extracellular segment spans residues 160 to 163 (SSSS). A helical transmembrane segment spans residues 164–184 (VPFTSIFSQLFMTVVVPLVIG). At 185–201 (QIVRRYIKDWLERKKPP) the chain is on the cytoplasmic side. Residues 202–222 (FGVVSSSVLLMIIYTTFCDTF) form a helical membrane-spanning segment. At 223 to 234 (SNPNIDLDKFSL) the chain is on the extracellular side. Residues 235–255 (ILILFIIVSVQLSFMLLTFIF) form a helical membrane-spanning segment. Residues 256–270 (STRNNSGFTPADTVA) are Cytoplasmic-facing. A helical transmembrane segment spans residues 271-291 (IIFCSTHKSLTLGIPMLKIVF). At 292–298 (AGHEHLS) the chain is on the extracellular side. Residues 299-319 (LISVPLLIYHPAQILLGSVLV) form a helical membrane-spanning segment. The Cytoplasmic segment spans residues 320 to 340 (PTIKSWMVSRQKGVKLTRPTV).

Belongs to the bile acid:sodium symporter (BASS) (TC 2.A.28) family. As to expression, expressed in heart, brain, colon, lung, liver, adrenal gland, stomach and ovary. Also expressed weakly in small intestine. Expressed in skeletal tissues.

The protein resides in the cell membrane. It localises to the endoplasmic reticulum membrane. Its subcellular location is the golgi apparatus membrane. Its function is as follows. Involved in teeth and skeletal development. Has an essential role in the biosynthesis and trafficking of glycosaminoglycans and glycoproteins to produce a proper functioning extracellular matrix. Required for extracellular matrix mineralization. Also involved in the regulation of cellular calcium homeostasis. Does not show transport activity towards bile acids or steroid sulfates (including taurocholate, cholate, chenodeoxycholate, estrone-3-sulfate, dehydroepiandrosterone sulfate (DHEAS) and pregnenolone sulfate). In Mus musculus (Mouse), this protein is Sodium/bile acid cotransporter 7 (Slc10a7).